Reading from the N-terminus, the 209-residue chain is Large ribosomal subunit protein uL3 (209 aa).

Residues 132–153 (ATHGNSLSHRVPGSIGQNQTPG) are disordered. N5-methylglutamine is present on glutamine 150.

Belongs to the universal ribosomal protein uL3 family. In terms of assembly, part of the 50S ribosomal subunit. Forms a cluster with proteins L14 and L19. Methylated by PrmB.

Functionally, one of the primary rRNA binding proteins, it binds directly near the 3'-end of the 23S rRNA, where it nucleates assembly of the 50S subunit. In Erwinia tasmaniensis (strain DSM 17950 / CFBP 7177 / CIP 109463 / NCPPB 4357 / Et1/99), this protein is Large ribosomal subunit protein uL3.